A 122-amino-acid chain; its full sequence is Large ribosomal subunit protein uL14 (122 aa).

This sequence belongs to the universal ribosomal protein uL14 family. In terms of assembly, part of the 50S ribosomal subunit. Forms a cluster with proteins L3 and L19. In the 70S ribosome, L14 and L19 interact and together make contacts with the 16S rRNA in bridges B5 and B8.

In terms of biological role, binds to 23S rRNA. Forms part of two intersubunit bridges in the 70S ribosome. The polypeptide is Large ribosomal subunit protein uL14 (Staphylococcus carnosus (strain TM300)).